The sequence spans 204 residues: Peptide deformylase (204 aa).

The Fe cation site is built by C131 and H174. E175 is a catalytic residue. A Fe cation-binding site is contributed by H178.

Belongs to the polypeptide deformylase family. Fe(2+) serves as cofactor.

The enzyme catalyses N-terminal N-formyl-L-methionyl-[peptide] + H2O = N-terminal L-methionyl-[peptide] + formate. In terms of biological role, removes the formyl group from the N-terminal Met of newly synthesized proteins. Requires at least a dipeptide for an efficient rate of reaction. N-terminal L-methionine is a prerequisite for activity but the enzyme has broad specificity at other positions. This chain is Peptide deformylase, found in Streptococcus pyogenes serotype M18 (strain MGAS8232).